A 325-amino-acid polypeptide reads, in one-letter code: Ubiquitin thioesterase OTU1 (325 aa).

The UBX-like stretch occupies residues 7–86 (RIRSKTGVEN…NVSSISSNPG (80 aa)). An OTU domain is found at 123–246 (ATRRVTDDDN…GIHYDALSIC (124 aa)). A cys-loop region spans residues 128–134 (TDDDNSC). Residue aspartate 131 is part of the active site. Cysteine 134 serves as the catalytic Nucleophile. The variable-loop stretch occupies residues 185 to 195 (IQNPKNWGGAI). Residues 235 to 239 (YDGIH) form a his-loop region. Isoleucine 238 serves as a coordination point for substrate. Histidine 239 is a catalytic residue. The segment at 265 to 270 (KDSLAK) is S2 site. A C2H2-type zinc finger spans residues 292 to 316 (LICLNCNKTLKGEKEAAIHASTTGH). Histidine 316 is an active-site residue.

It localises to the cytoplasm. It carries out the reaction Thiol-dependent hydrolysis of ester, thioester, amide, peptide and isopeptide bonds formed by the C-terminal Gly of ubiquitin (a 76-residue protein attached to proteins as an intracellular targeting signal).. Its function is as follows. Hydrolase that can remove conjugated ubiquitin from proteins and may therefore play an important regulatory role at the level of protein turnover by preventing degradation. The chain is Ubiquitin thioesterase OTU1 (yod1) from Dictyostelium discoideum (Social amoeba).